Here is an 892-residue protein sequence, read N- to C-terminus: Bifunctional uridylyltransferase/uridylyl-removing enzyme (892 aa).

Residues 1-348 (MPNFTGNTRP…LVDAKVHVRP (348 aa)) form a uridylyltransferase region. Positions 349 to 710 (INERFQARNG…RIHNQEPGTM (362 aa)) are uridylyl-removing. One can recognise an HD domain in the interval 467–589 (VDEHTLFLIH…VGDERRLNHL (123 aa)). ACT domains follow at residues 711-786 (EVFI…LTQP) and 822-892 (VMEL…YLER).

It belongs to the GlnD family. Mg(2+) is required as a cofactor.

The enzyme catalyses [protein-PII]-L-tyrosine + UTP = [protein-PII]-uridylyl-L-tyrosine + diphosphate. It catalyses the reaction [protein-PII]-uridylyl-L-tyrosine + H2O = [protein-PII]-L-tyrosine + UMP + H(+). Uridylyltransferase (UTase) activity is inhibited by glutamine, while glutamine activates uridylyl-removing (UR) activity. Modifies, by uridylylation and deuridylylation, the PII regulatory proteins (GlnB and homologs), in response to the nitrogen status of the cell that GlnD senses through the glutamine level. Under low glutamine levels, catalyzes the conversion of the PII proteins and UTP to PII-UMP and PPi, while under higher glutamine levels, GlnD hydrolyzes PII-UMP to PII and UMP (deuridylylation). Thus, controls uridylylation state and activity of the PII proteins, and plays an important role in the regulation of nitrogen assimilation and metabolism. The chain is Bifunctional uridylyltransferase/uridylyl-removing enzyme from Nitrosococcus oceani (strain ATCC 19707 / BCRC 17464 / JCM 30415 / NCIMB 11848 / C-107).